The sequence spans 46 residues: Defensin Tk-AMP-D6 (46 aa).

4 disulfides stabilise this stretch: C3-C46, C14-C34, C20-C40, and C24-C42.

Its function is as follows. Plant defense peptide. The protein is Defensin Tk-AMP-D6 of Triticum kiharae (Wheat).